The sequence spans 776 residues: Lysyl oxidase homolog 2 (776 aa).

A signal peptide spans 1–25; it reads MELHFGSCLSGCLALLVLLPSLSLA. 4 consecutive SRCR domains span residues 61–162, 191–305, 329–428, and 438–546; these read VRLA…VVCS, IRPI…VSCV, VRLR…VRCN, and VRLN…VACS. Disulfide bonds link C87–C151, C100–C161, C131–C141, C221–C294, C234–C304, C268–C278, C354–C417, C367–C427, and C398–C408. A glycan (N-linked (GlcNAc...) asparagine) is linked at N267. A glycan (N-linked (GlcNAc...) asparagine) is linked at N291. N-linked (GlcNAc...) asparagine glycosylation is present at N458. 3 disulfide bridges follow: C467–C532, C480–C545, and C514–C524. A lysyl-oxidase like region spans residues 550–753; it reads PDLVLNAEIV…WMYNCHVGGA (204 aa). Ca(2+)-binding residues include D551 and L552. 4 cysteine pairs are disulfide-bonded: C575–C627, C581–C697, C659–C675, and C665–C687. Cu cation is bound by residues H628, H630, and H632. N-linked (GlcNAc...) asparagine glycosylation occurs at N646. Residues 655–691 constitute a cross-link (lysine tyrosylquinone (Lys-Tyr)); it reads KASFCLEDTECEGDIQKSYECANFGEQGITMGCWDMY. Y691 bears the 2',4',5'-topaquinone mark. The Ca(2+) site is built by E724, D726, N729, and N730. A disulfide bond links C734 and C748.

The protein belongs to the lysyl oxidase family. Component of some chromatin repressor complex. Interacts with SNAI1. Interacts with TAF10. Interacts with HSPA5. Interacts with EFEMP2. Cu cation serves as cofactor. Lysine tyrosylquinone residue is required as a cofactor. In terms of processing, the lysine tyrosylquinone cross-link (LTQ) is generated by condensation of the epsilon-amino group of a lysine with a topaquinone produced by oxidation of tyrosine. N-glycosylated. N-glycosylation on Asn-458 and Asn-646 may be essential for proper folding and secretion; may be composed of a fucosylated carbohydrates attached to a trimannose N-linked glycan core. As to expression, ubiquitous. Highest expression in skin, lung and thymus. Present in chondrocytes: mainly expressed by chondrocytes in healing fractures and in epiphyseal growth plates (at protein level).

It localises to the secreted. The protein localises to the extracellular space. Its subcellular location is the extracellular matrix. The protein resides in the basement membrane. It is found in the nucleus. It localises to the chromosome. The protein localises to the endoplasmic reticulum. The enzyme catalyses L-lysyl-[protein] + O2 + H2O = (S)-2-amino-6-oxohexanoyl-[protein] + H2O2 + NH4(+). Its activity is regulated as follows. Specifically inhibited by a mouse monoclonal antibody AB0023, inhibition occurs in a non-competitive manner. Mediates the post-translational oxidative deamination of lysine residues on target proteins leading to the formation of deaminated lysine (allysine). Acts as a transcription corepressor and specifically mediates deamination of trimethylated 'Lys-4' of histone H3 (H3K4me3), a specific tag for epigenetic transcriptional activation. Shows no activity against histone H3 when it is trimethylated on 'Lys-9' (H3K9me3) or 'Lys-27' (H3K27me3) or when 'Lys-4' is monomethylated (H3K4me1) or dimethylated (H3K4me2). Also mediates deamination of methylated TAF10, a member of the transcription factor IID (TFIID) complex, which induces release of TAF10 from promoters, leading to inhibition of TFIID-dependent transcription. LOXL2-mediated deamination of TAF10 results in transcriptional repression of genes required for embryonic stem cell pluripotency including POU5F1/OCT4, NANOG, KLF4 and SOX2. Involved in epithelial to mesenchymal transition (EMT) via interaction with SNAI1 and participates in repression of E-cadherin, probably by mediating deamination of histone H3. During EMT, involved with SNAI1 in negatively regulating pericentromeric heterochromatin transcription. SNAI1 recruits LOXL2 to pericentromeric regions to oxidize histone H3 and repress transcription which leads to release of heterochromatin component CBX5/HP1A, enabling chromatin reorganization and acquisition of mesenchymal traits. Interacts with the endoplasmic reticulum protein HSPA5 which activates the IRE1-XBP1 pathway of the unfolded protein response, leading to expression of several transcription factors involved in EMT and subsequent EMT induction. When secreted into the extracellular matrix, promotes cross-linking of extracellular matrix proteins by mediating oxidative deamination of peptidyl lysine residues in precursors to fibrous collagen and elastin. Acts as a regulator of sprouting angiogenesis, probably via collagen IV scaffolding. Acts as a regulator of chondrocyte differentiation, probably by regulating expression of factors that control chondrocyte differentiation. The sequence is that of Lysyl oxidase homolog 2 (Loxl2) from Mus musculus (Mouse).